Here is a 207-residue protein sequence, read N- to C-terminus: Small ribosomal subunit protein uS4 (207 aa).

Positions 31–54 are disordered; sequence KSKFETKPGQHGRTSGSRTSDFGL. Polar residues predominate over residues 42-52; that stretch reads GRTSGSRTSDF. One can recognise an S4 RNA-binding domain in the interval 97–158; sequence SRLDNVVYRM…KAKKQLRVTE (62 aa).

The protein belongs to the universal ribosomal protein uS4 family. Part of the 30S ribosomal subunit. Contacts protein S5. The interaction surface between S4 and S5 is involved in control of translational fidelity.

One of the primary rRNA binding proteins, it binds directly to 16S rRNA where it nucleates assembly of the body of the 30S subunit. Functionally, with S5 and S12 plays an important role in translational accuracy. In Methylibium petroleiphilum (strain ATCC BAA-1232 / LMG 22953 / PM1), this protein is Small ribosomal subunit protein uS4.